The sequence spans 226 residues: ATP synthase F(0) complex subunit a (226 aa).

6 helical membrane-spanning segments follow: residues 12 to 32 (PTVL…LLIP), 68 to 88 (WSLM…LGLL), 97 to 117 (QLSM…AMGL), 138 to 158 (IPML…ALAV), 182 to 202 (LAIN…LTIL), and 203 to 223 (ETAI…LYLH).

It belongs to the ATPase A chain family. Component of the ATP synthase complex composed at least of ATP5F1A/subunit alpha, ATP5F1B/subunit beta, ATP5MC1/subunit c (homooctomer), MT-ATP6/subunit a, MT-ATP8/subunit 8, ATP5ME/subunit e, ATP5MF/subunit f, ATP5MG/subunit g, ATP5MK/subunit k, ATP5MJ/subunit j, ATP5F1C/subunit gamma, ATP5F1D/subunit delta, ATP5F1E/subunit epsilon, ATP5PF/subunit F6, ATP5PB/subunit b, ATP5PD/subunit d, ATP5PO/subunit OSCP. ATP synthase complex consists of a soluble F(1) head domain (subunits alpha(3) and beta(3)) - the catalytic core - and a membrane F(0) domain - the membrane proton channel (subunits c, a, 8, e, f, g, k and j). These two domains are linked by a central stalk (subunits gamma, delta, and epsilon) rotating inside the F1 region and a stationary peripheral stalk (subunits F6, b, d, and OSCP). Interacts with DNAJC30; interaction is direct.

The protein localises to the mitochondrion inner membrane. The enzyme catalyses H(+)(in) = H(+)(out). Subunit a, of the mitochondrial membrane ATP synthase complex (F(1)F(0) ATP synthase or Complex V) that produces ATP from ADP in the presence of a proton gradient across the membrane which is generated by electron transport complexes of the respiratory chain. ATP synthase complex consist of a soluble F(1) head domain - the catalytic core - and a membrane F(1) domain - the membrane proton channel. These two domains are linked by a central stalk rotating inside the F(1) region and a stationary peripheral stalk. During catalysis, ATP synthesis in the catalytic domain of F(1) is coupled via a rotary mechanism of the central stalk subunits to proton translocation. With the subunit c (ATP5MC1), forms the proton-conducting channel in the F(0) domain, that contains two crucial half-channels (inlet and outlet) that facilitate proton movement from the mitochondrial intermembrane space (IMS) into the matrix. Protons are taken up via the inlet half-channel and released through the outlet half-channel, following a Grotthuss mechanism. The chain is ATP synthase F(0) complex subunit a from Pongo abelii (Sumatran orangutan).